Here is a 715-residue protein sequence, read N- to C-terminus: Polyribonucleotide nucleotidyltransferase (715 aa).

Residues aspartate 490 and aspartate 496 each contribute to the Mg(2+) site. One can recognise a KH domain in the interval 557–616 (PRIETMTIPTDKIREVIGSGGKVIREIVETSGAKVDISDDGTIKIASANADSIKKAYDMI). The region spanning 626 to 694 (GKIYVGKVVK…DRGKVRLGMK (69 aa)) is the S1 motif domain.

This sequence belongs to the polyribonucleotide nucleotidyltransferase family. The cofactor is Mg(2+).

It localises to the cytoplasm. It catalyses the reaction RNA(n+1) + phosphate = RNA(n) + a ribonucleoside 5'-diphosphate. In terms of biological role, involved in mRNA degradation. Catalyzes the phosphorolysis of single-stranded polyribonucleotides processively in the 3'- to 5'-direction. This is Polyribonucleotide nucleotidyltransferase from Paracoccus denitrificans (strain Pd 1222).